The primary structure comprises 204 residues: Inositol diphosphatase DSP5 (204 aa).

The Tyrosine-protein phosphatase domain maps to 19–168 (NFSMVEDEIY…FDVLRLKQCL (150 aa)). The segment at 75–87 (FGIEGKTDPPTPM) is WPD loop important for active site topology. Residue Cys111 is the Phosphocysteine intermediate of the active site.

The protein belongs to the protein-tyrosine phosphatase family. Atypical dual-specificity phosphatase Siw14-like subfamily. In terms of tissue distribution, highly expressed in flowers. Expressed at low levels in roots, leaves, stems and siliques.

It catalyses the reaction 5-diphospho-1D-myo-inositol 1,2,3,4,6-pentakisphosphate + H2O = 1D-myo-inositol hexakisphosphate + phosphate + H(+). The catalysed reaction is 1,5-bis(diphospho)-1D-myo-inositol 2,3,4,6-tetrakisphosphate + H2O = 1-diphospho-1D-myo-inositol 2,3,4,5,6-pentakisphosphate + phosphate + 2 H(+). The enzyme catalyses 3,5-bis(diphospho)-1D-myo-inositol 1,2,4,6-tetrakisphosphate + H2O = 3-diphospho-1D-myo-inositol 1,2,4,5,6-pentakisphosphate + phosphate + 2 H(+). It carries out the reaction 6-diphospho-1D-myo-inositol pentakisphosphate + H2O = 1D-myo-inositol hexakisphosphate + phosphate + H(+). Cleaves the beta-phosphate at the 5-position of soluble inositol pyrophosphates. Has highest activity on 5-diphosphoinositol 1,2,3,4,6-pentakisphosphate (5-InsP(7)). Possesses low phosphotyrosine phosphatase activity in vitro. Dephosphorylates the phosphoinositides PI(3,5)P2. Hydrolyzes O-methylfluorescein phosphate in vitro. The polypeptide is Inositol diphosphatase DSP5 (Arabidopsis thaliana (Mouse-ear cress)).